The chain runs to 88 residues: Small ribosomal subunit protein bS20 (88 aa).

Residues 1–21 are disordered; the sequence is MANTTSAKKATRKIARRTAVN.

This sequence belongs to the bacterial ribosomal protein bS20 family.

Binds directly to 16S ribosomal RNA. The chain is Small ribosomal subunit protein bS20 from Agrobacterium fabrum (strain C58 / ATCC 33970) (Agrobacterium tumefaciens (strain C58)).